We begin with the raw amino-acid sequence, 296 residues long: 4-hydroxy-tetrahydrodipicolinate synthase (296 aa).

Thr49 is a pyruvate binding site. The active-site Proton donor/acceptor is the Tyr137. Lys165 (schiff-base intermediate with substrate) is an active-site residue. Position 207 (Val207) interacts with pyruvate.

It belongs to the DapA family. Homotetramer; dimer of dimers.

It is found in the cytoplasm. It carries out the reaction L-aspartate 4-semialdehyde + pyruvate = (2S,4S)-4-hydroxy-2,3,4,5-tetrahydrodipicolinate + H2O + H(+). It participates in amino-acid biosynthesis; L-lysine biosynthesis via DAP pathway; (S)-tetrahydrodipicolinate from L-aspartate: step 3/4. In terms of biological role, catalyzes the condensation of (S)-aspartate-beta-semialdehyde [(S)-ASA] and pyruvate to 4-hydroxy-tetrahydrodipicolinate (HTPA). This Nitrobacter hamburgensis (strain DSM 10229 / NCIMB 13809 / X14) protein is 4-hydroxy-tetrahydrodipicolinate synthase.